A 70-amino-acid polypeptide reads, in one-letter code: Small ribosomal subunit protein bS21A (70 aa).

The protein belongs to the bacterial ribosomal protein bS21 family.

The chain is Small ribosomal subunit protein bS21A from Burkholderia orbicola (strain AU 1054).